Here is a 275-residue protein sequence, read N- to C-terminus: Polyamine aminopropyltransferase (275 aa).

The PABS domain occupies 2–235; it reads ELWFTEKQTK…GLWTFTIGSK (234 aa). Position 31 (glutamine 31) interacts with S-methyl-5'-thioadenosine. Residues histidine 62 and aspartate 86 each contribute to the spermidine site. Residues glutamate 106 and 137 to 138 each bind S-methyl-5'-thioadenosine; that span reads DG. Residue aspartate 155 is the Proton acceptor of the active site. Residue 155-158 coordinates spermidine; the sequence is DSTE. Residue proline 162 coordinates S-methyl-5'-thioadenosine.

Belongs to the spermidine/spermine synthase family. In terms of assembly, homodimer or homotetramer.

The protein localises to the cytoplasm. The enzyme catalyses S-adenosyl 3-(methylsulfanyl)propylamine + putrescine = S-methyl-5'-thioadenosine + spermidine + H(+). Its pathway is amine and polyamine biosynthesis; spermidine biosynthesis; spermidine from putrescine: step 1/1. Catalyzes the irreversible transfer of a propylamine group from the amino donor S-adenosylmethioninamine (decarboxy-AdoMet) to putrescine (1,4-diaminobutane) to yield spermidine. The protein is Polyamine aminopropyltransferase of Bacillus mycoides (strain KBAB4) (Bacillus weihenstephanensis).